A 282-amino-acid polypeptide reads, in one-letter code: Pantothenate synthetase (282 aa).

Residue 30-37 (MGYLHEGH) coordinates ATP. Residue H37 is the Proton donor of the active site. (R)-pantoate is bound at residue Q61. Beta-alanine is bound at residue Q61. Position 147–150 (147–150 (GMKD)) interacts with ATP. Q153 contacts (R)-pantoate. Residues V176 and 184-187 (KSSR) each bind ATP.

This sequence belongs to the pantothenate synthetase family. As to quaternary structure, homodimer.

The protein resides in the cytoplasm. It carries out the reaction (R)-pantoate + beta-alanine + ATP = (R)-pantothenate + AMP + diphosphate + H(+). Its pathway is cofactor biosynthesis; (R)-pantothenate biosynthesis; (R)-pantothenate from (R)-pantoate and beta-alanine: step 1/1. Functionally, catalyzes the condensation of pantoate with beta-alanine in an ATP-dependent reaction via a pantoyl-adenylate intermediate. The chain is Pantothenate synthetase from Bacillus anthracis (strain A0248).